Here is a 60-residue protein sequence, read N- to C-terminus: Cytochrome c oxidase subunit 9, mitochondrial (60 aa).

Residues 1 to 15 (MSAIAPITGTIRKRI) are Mitochondrial matrix-facing. The chain crosses the membrane as a helical span at residues 16–38 (LADITIGFAIGGAMASYWWWGFH). The Mitochondrial intermembrane portion of the chain corresponds to 39–57 (KNIINKREAYYAKLAEQKA). Residues 58-60 (AEN) constitute a propeptide, removed in mature form.

Belongs to the fungal cytochrome c oxidase subunit 7a family. Component of the cytochrome c oxidase (complex IV, CIV), a multisubunit enzyme composed of a catalytic core of 3 subunits and several supernumerary subunits. The complex exists as a monomer or a dimer and forms supercomplexes (SCs) in the inner mitochondrial membrane with ubiquinol-cytochrome c oxidoreductase (cytochrome b-c1 complex, complex III, CIII).

Its subcellular location is the mitochondrion inner membrane. The protein operates within energy metabolism; oxidative phosphorylation. In terms of biological role, component of the cytochrome c oxidase, the last enzyme in the mitochondrial electron transport chain which drives oxidative phosphorylation. The respiratory chain contains 3 multisubunit complexes succinate dehydrogenase (complex II, CII), ubiquinol-cytochrome c oxidoreductase (cytochrome b-c1 complex, complex III, CIII) and cytochrome c oxidase (complex IV, CIV), that cooperate to transfer electrons derived from NADH and succinate to molecular oxygen, creating an electrochemical gradient over the inner membrane that drives transmembrane transport and the ATP synthase. Cytochrome c oxidase is the component of the respiratory chain that catalyzes the reduction of oxygen to water. Electrons originating from reduced cytochrome c in the intermembrane space (IMS) are transferred via the dinuclear copper A center (CU(A)) of subunit 2 and heme A of subunit 1 to the active site in subunit 1, a binuclear center (BNC) formed by heme A3 and copper B (CU(B)). The BNC reduces molecular oxygen to 2 water molecules using 4 electrons from cytochrome c in the IMS and 4 protons from the mitochondrial matrix. In Kluyveromyces lactis (strain ATCC 8585 / CBS 2359 / DSM 70799 / NBRC 1267 / NRRL Y-1140 / WM37) (Yeast), this protein is Cytochrome c oxidase subunit 9, mitochondrial (COX9).